The sequence spans 85 residues: Putative membrane protein insertion efficiency factor (85 aa).

This sequence belongs to the UPF0161 family.

The protein localises to the cell membrane. Functionally, could be involved in insertion of integral membrane proteins into the membrane. The chain is Putative membrane protein insertion efficiency factor from Leifsonia xyli subsp. xyli (strain CTCB07).